The chain runs to 247 residues: Chymase (247 aa).

A signal peptide spans 1–19 (MHLLTLHLLLLLLGSSTKA). Positions 20–21 (GE) are cleaved as a propeptide — activation peptide. The Peptidase S1 domain maps to 22–245 (IIGGTECIPH…YRPWINKILR (224 aa)). Cys-51 and Cys-67 form a disulfide bridge. Catalysis depends on His-66, which acts as the Charge relay system. An N-linked (GlcNAc...) asparagine glycan is attached at Asn-80. The active-site Charge relay system is the Asp-110. 2 disulfides stabilise this stretch: Cys-144–Cys-209 and Cys-175–Cys-188. The active-site Charge relay system is the Ser-203.

This sequence belongs to the peptidase S1 family. Granzyme subfamily. Mast cells.

It localises to the secreted. The protein localises to the cytoplasmic granule. The enzyme catalyses Preferential cleavage: Phe-|-Xaa &gt; Tyr-|-Xaa &gt; Trp-|-Xaa &gt; Leu-|-Xaa.. Major secreted protease of mast cells with suspected roles in vasoactive peptide generation, extracellular matrix degradation, and regulation of gland secretion. The chain is Chymase (Cma1) from Mus musculus (Mouse).